The primary structure comprises 432 residues: Adenylosuccinate synthetase (432 aa).

Residues glycine 13 to lysine 19 and glycine 41 to threonine 43 contribute to the GTP site. Aspartate 14 (proton acceptor) is an active-site residue. The Mg(2+) site is built by aspartate 14 and glycine 41. IMP is bound by residues aspartate 14 to lysine 17, asparagine 39 to histidine 42, threonine 130, arginine 144, glutamine 225, threonine 240, and arginine 304. The Proton donor role is filled by histidine 42. Residue alanine 300–arginine 306 coordinates substrate. GTP contacts are provided by residues arginine 306, lysine 332 to aspartate 334, and serine 415 to glycine 417.

This sequence belongs to the adenylosuccinate synthetase family. In terms of assembly, homodimer. Mg(2+) is required as a cofactor.

It localises to the cytoplasm. The catalysed reaction is IMP + L-aspartate + GTP = N(6)-(1,2-dicarboxyethyl)-AMP + GDP + phosphate + 2 H(+). It functions in the pathway purine metabolism; AMP biosynthesis via de novo pathway; AMP from IMP: step 1/2. In terms of biological role, plays an important role in the de novo pathway of purine nucleotide biosynthesis. Catalyzes the first committed step in the biosynthesis of AMP from IMP. This Actinobacillus pleuropneumoniae serotype 7 (strain AP76) protein is Adenylosuccinate synthetase.